A 582-amino-acid chain; its full sequence is Inositol transporter 4 (582 aa).

12 helical membrane passes run 35–55 (GIGGLLFGYDTGVISGALLFI), 70–90 (STIVSMAVAGAIVGAAVGGWI), 105–125 (VLFLIGAIVMAFAPAPWVIIV), 128–148 (IFVGFGVGMASMTSPLYISEA), 162–182 (GLLITGGQFFSYLINLAFVHT), 188–208 (WMLGVAGVPAIVQFVLMLSLP), 290–310 (FVGINTVMYYSPSIVQFAGYA), 317–337 (ALSLITSGLNALGSIVSMMFV), 345–365 (LMIISMFGIIACLIILATVFS), 456–476 (FGFLAIVFLGLYIVVYAPGMG), 494–514 (LGGGIAAVSNWVSNLIVSESF), and 525–545 (GTFLLFAGFSTIGLFFIWLLV).

This sequence belongs to the major facilitator superfamily. Sugar transporter (TC 2.A.1.1) family. Highly expressed in pollen and phloem companion cells.

The protein localises to the cell membrane. In terms of biological role, plasma membrane inositol-proton symporter. Mediates high-affinity myoinositol-proton symport across the plasma membrane. Active with myoinositol, scylloinositol and D-chiroinositol. Low activity with mucoinositol and alloinositol. The polypeptide is Inositol transporter 4 (INT4) (Arabidopsis thaliana (Mouse-ear cress)).